A 334-amino-acid chain; its full sequence is Porphobilinogen deaminase (334 aa).

S-(dipyrrolylmethanemethyl)cysteine is present on C255.

This sequence belongs to the HMBS family. As to quaternary structure, monomer. It depends on dipyrromethane as a cofactor.

The enzyme catalyses 4 porphobilinogen + H2O = hydroxymethylbilane + 4 NH4(+). It functions in the pathway porphyrin-containing compound metabolism; protoporphyrin-IX biosynthesis; coproporphyrinogen-III from 5-aminolevulinate: step 2/4. Its function is as follows. Tetrapolymerization of the monopyrrole PBG into the hydroxymethylbilane pre-uroporphyrinogen in several discrete steps. The sequence is that of Porphobilinogen deaminase from Burkholderia orbicola (strain MC0-3).